Here is a 340-residue protein sequence, read N- to C-terminus: Mitochondrial amidoxime-reducing component 1 (340 aa).

Gly-2 carries N-myristoyl glycine lipidation. Over 2 to 24 the chain is Mitochondrial matrix; sequence GAGSWALTLFGFSAFRVPGQPRS. Residues 25-44 traverse the membrane as a helical; Signal-anchor for type II membrane protein segment; that stretch reads TWLGVAALGLAAVALGTVAW. Topologically, residues 45–340 are cytoplasmic; it reads RRARPRRRRR…VGDPVYLLGQ (296 aa). Positions 70, 71, and 95 each coordinate Mo-molybdopterin. The tract at residues 96-186 is MOSC N-terminal region; sequence FWLVINEEGN…KMQSCRLVHF (91 aa). The MOSC domain maps to 191–338; that stretch reads RPRSSRQMKA…IRVGDPVYLL (148 aa). Ser-214, Arg-241, Asn-243, Thr-274, Arg-275, Cys-276, and Tyr-320 together coordinate Mo-molybdopterin.

As to quaternary structure, component of a complex composed of cytochrome b5, NADH-cytochrome b5 reductase and MTARC1. Mo-molybdopterin serves as cofactor.

It is found in the mitochondrion outer membrane. The protein localises to the membrane. The catalysed reaction is N(omega)-hydroxy-L-arginine + 2 Fe(II)-[cytochrome b5] + 2 H(+) = L-arginine + 2 Fe(III)-[cytochrome b5] + H2O. Its function is as follows. Catalyzes the reduction of N-oxygenated molecules, acting as a counterpart of cytochrome P450 and flavin-containing monooxygenases in metabolic cycles. As a component of prodrug-converting system, reduces a multitude of N-hydroxylated prodrugs particularly amidoximes, leading to increased drug bioavailability. May be involved in mitochondrial N(omega)-hydroxy-L-arginine (NOHA) reduction, regulating endogenous nitric oxide levels and biosynthesis. Postulated to cleave the N-OH bond of N-hydroxylated substrates in concert with electron transfer from NADH to cytochrome b5 reductase then to cytochrome b5, the ultimate electron donor that primes the active site for substrate reduction. In Mus musculus (Mouse), this protein is Mitochondrial amidoxime-reducing component 1 (Mtarc1).